Reading from the N-terminus, the 440-residue chain is Oligodendrocyte-myelin glycoprotein (440 aa).

A signal peptide spans 1 to 24 (MEYQILKMSLCLFILLFLTPGILC). The LRRNT domain maps to 25–55 (ICPLQCICTERHRHVDCSGRNLSTLPSGLQE). Residues Asn-45 and Asn-61 are each glycosylated (N-linked (GlcNAc...) asparagine). 8 LRR repeats span residues 56–77 (NIIH…LTQY), 79–100 (NLRT…LPRS), 101–121 (LWNM…DTAY), 124–145 (NLKY…KNTL), 147–168 (SLEV…MPSK), 169–189 (LHIV…TLIN), 192–213 (NLTH…SFDQ), and 216–239 (QLQE…TYLL). A glycan (N-linked (GlcNAc...) asparagine) is linked at Asn-103. Asn-152, Asn-176, Asn-189, Asn-192, and Asn-234 each carry an N-linked (GlcNAc...) asparagine glycan. Ser/Thr-rich repeat units follow at residues 229 to 270 (CDHK…YPTP), 271 to 292 (SGFT…INSL), 293 to 335 (SVVT…VPYP), 336 to 377 (EDTS…SPTP), and 378 to 416 (MTLS…TPLP). Asn-364 and Asn-389 each carry an N-linked (GlcNAc...) asparagine glycan. Residue Ser-417 is the site of GPI-anchor amidated serine attachment. The propeptide at 418 to 440 (VANAWKVNASFLLLLNVVVMLAV) is removed in mature form. The N-linked (GlcNAc...) asparagine glycan is linked to Asn-425.

In terms of assembly, binds to RTN4R. Post-translationally, O-glycosylated in its Ser/Thr-rich repeat domain. In terms of tissue distribution, oligodendrocytes and myelin of the central nervous system.

It is found in the cell membrane. Functionally, cell adhesion molecule contributing to the interactive process required for myelination in the central nervous system. This Homo sapiens (Human) protein is Oligodendrocyte-myelin glycoprotein (OMG).